Consider the following 188-residue polypeptide: MNGDDAFARRPRDDAQISEKLRKAFDDIAKYFSKKEWEKMKSSEKIVYVYMKLNYEVMTKLGFKVTLPPFMRSKRAADFHGNDFGNDRNHRNQVERPQMTFGSLQRIFPKIMPKKPAEEENGLKEVPEASGPQNDGKQLCPPGNPSTLEKINKTSGPKRGKHAWTHRLRERKQLVVYEEISDPEEDDE.

The KRAB-related domain occupies 20-83 (KLRKAFDDIA…KRAADFHGND (64 aa)). Basic and acidic residues predominate over residues 116 to 127 (PAEEENGLKEVP). Residues 116–167 (PAEEENGLKEVPEASGPQNDGKQLCPPGNPSTLEKINKTSGPKRGKHAWTHR) form a disordered region. Residues 145–155 (PSTLEKINKTS) are compositionally biased toward polar residues. Basic residues predominate over residues 156-167 (GPKRGKHAWTHR).

It belongs to the SSX family.

Its function is as follows. Could act as a modulator of transcription. In Homo sapiens (Human), this protein is Protein SSX4 (SSX4).